Consider the following 550-residue polypeptide: Dihydroxy-acid dehydratase (550 aa).

Asp78 contacts Mg(2+). Cys119 contacts [2Fe-2S] cluster. Mg(2+) contacts are provided by Asp120 and Lys121. An N6-carboxylysine modification is found at Lys121. Residue Cys191 participates in [2Fe-2S] cluster binding. Residue Glu440 participates in Mg(2+) binding. The active-site Proton acceptor is Ser466.

This sequence belongs to the IlvD/Edd family. Homodimer. It depends on [2Fe-2S] cluster as a cofactor. The cofactor is Mg(2+).

It catalyses the reaction (2R)-2,3-dihydroxy-3-methylbutanoate = 3-methyl-2-oxobutanoate + H2O. The enzyme catalyses (2R,3R)-2,3-dihydroxy-3-methylpentanoate = (S)-3-methyl-2-oxopentanoate + H2O. It participates in amino-acid biosynthesis; L-isoleucine biosynthesis; L-isoleucine from 2-oxobutanoate: step 3/4. The protein operates within amino-acid biosynthesis; L-valine biosynthesis; L-valine from pyruvate: step 3/4. Functionally, functions in the biosynthesis of branched-chain amino acids. Catalyzes the dehydration of (2R,3R)-2,3-dihydroxy-3-methylpentanoate (2,3-dihydroxy-3-methylvalerate) into 2-oxo-3-methylpentanoate (2-oxo-3-methylvalerate) and of (2R)-2,3-dihydroxy-3-methylbutanoate (2,3-dihydroxyisovalerate) into 2-oxo-3-methylbutanoate (2-oxoisovalerate), the penultimate precursor to L-isoleucine and L-valine, respectively. The polypeptide is Dihydroxy-acid dehydratase (Methanococcus maripaludis (strain C6 / ATCC BAA-1332)).